The following is a 214-amino-acid chain: Small ribosomal subunit protein uS4c (214 aa).

Basic residues-rich tracts occupy residues 1-14 (MSRY…KIKR) and 36-46 (LSRPKPKKKSQ). The interval 1–46 (MSRYRGPRVKKIKRLGSLPGLTTKKPPIVVRDPRKLSRPKPKKKSQ) is disordered. In terms of domain architecture, S4 RNA-binding spans 92–153 (MRLDNTLFRL…KEKSKALIQN (62 aa)).

Belongs to the universal ribosomal protein uS4 family. Part of the 30S ribosomal subunit. Contacts protein S5. The interaction surface between S4 and S5 is involved in control of translational fidelity.

It localises to the plastid. It is found in the chloroplast. One of the primary rRNA binding proteins, it binds directly to 16S rRNA where it nucleates assembly of the body of the 30S subunit. Functionally, with S5 and S12 plays an important role in translational accuracy. In Pelargonium hortorum (Common geranium), this protein is Small ribosomal subunit protein uS4c (rps4).